The sequence spans 602 residues: Glutamyl-tRNA(Gln) amidotransferase subunit B, mitochondrial (602 aa).

It belongs to the GatB/GatE family. GatB subfamily. In terms of assembly, subunit of the heterotrimeric GatCAB amidotransferase (AdT) complex, composed of A, B and C subunits.

The protein resides in the mitochondrion. The enzyme catalyses L-glutamyl-tRNA(Gln) + L-glutamine + ATP + H2O = L-glutaminyl-tRNA(Gln) + L-glutamate + ADP + phosphate + H(+). Functionally, allows the formation of correctly charged Gln-tRNA(Gln) through the transamidation of misacylated Glu-tRNA(Gln) in the mitochondria. The reaction takes place in the presence of glutamine and ATP through an activated gamma-phospho-Glu-tRNA(Gln). The chain is Glutamyl-tRNA(Gln) amidotransferase subunit B, mitochondrial from Paracoccidioides lutzii (strain ATCC MYA-826 / Pb01) (Paracoccidioides brasiliensis).